The chain runs to 261 residues: (R)-S-adenosyl-L-methionine hydrolase (261 aa).

3 residues coordinate adenosine: Asp12, Asp72, and Asn187. Positions 187, 231, and 239 each coordinate (R)-S-adenosyl-L-methionine. Residue Val239 coordinates adenosine.

This sequence belongs to the SAM hydrolase / SAM-dependent halogenase family.

The catalysed reaction is (R)-S-adenosyl-L-methionine + H2O = adenosine + L-methionine + H(+). Specifically hydrolyzes (R)-S-adenosyl-L-methionine ((R)-SAM), the inactive form of the ubiquitous cofactor SAM, into adenosine and L-methionine. Is stereoselective as it cannot use the active form of SAM, (S)-S-adenosyl-L-methionine, as substrate. Likely plays a role in preventing accumulation of (R)-S-adenosyl-L-methionine in cells; maintenance of (S)-S-denosyl-L-methionine homochirality is important for cellular health given that the (R)-form is largely inactive as a methyl donor and can function as an inhibitor of methyltransferases. This is (R)-S-adenosyl-L-methionine hydrolase from Salinispora tropica (strain ATCC BAA-916 / DSM 44818 / JCM 13857 / NBRC 105044 / CNB-440).